A 266-amino-acid polypeptide reads, in one-letter code: Ribosomal RNA small subunit methyltransferase A (266 aa).

The S-adenosyl-L-methionine site is built by asparagine 13, leucine 15, glycine 40, glutamate 61, aspartate 86, and asparagine 110.

Belongs to the class I-like SAM-binding methyltransferase superfamily. rRNA adenine N(6)-methyltransferase family. RsmA subfamily.

It is found in the cytoplasm. It carries out the reaction adenosine(1518)/adenosine(1519) in 16S rRNA + 4 S-adenosyl-L-methionine = N(6)-dimethyladenosine(1518)/N(6)-dimethyladenosine(1519) in 16S rRNA + 4 S-adenosyl-L-homocysteine + 4 H(+). Its function is as follows. Specifically dimethylates two adjacent adenosines (A1518 and A1519) in the loop of a conserved hairpin near the 3'-end of 16S rRNA in the 30S particle. May play a critical role in biogenesis of 30S subunits. This is Ribosomal RNA small subunit methyltransferase A from Hydrogenovibrio crunogenus (strain DSM 25203 / XCL-2) (Thiomicrospira crunogena).